Here is a 276-residue protein sequence, read N- to C-terminus: Acetyl-coenzyme A carboxylase carboxyl transferase subunit beta (276 aa).

The CoA carboxyltransferase N-terminal domain occupies 24–276 (LWRECSNCHE…NNLLNLHSDK (253 aa)). Cys28, Cys31, Cys46, and Cys49 together coordinate Zn(2+). A C4-type zinc finger spans residues 28 to 49 (CSNCHEKFYYRRAGVYEVCPNC).

It belongs to the AccD/PCCB family. Acetyl-CoA carboxylase is a heterohexamer composed of biotin carboxyl carrier protein (AccB), biotin carboxylase (AccC) and two subunits each of ACCase subunit alpha (AccA) and ACCase subunit beta (AccD). It depends on Zn(2+) as a cofactor.

It localises to the cytoplasm. The catalysed reaction is N(6)-carboxybiotinyl-L-lysyl-[protein] + acetyl-CoA = N(6)-biotinyl-L-lysyl-[protein] + malonyl-CoA. Its pathway is lipid metabolism; malonyl-CoA biosynthesis; malonyl-CoA from acetyl-CoA: step 1/1. Functionally, component of the acetyl coenzyme A carboxylase (ACC) complex. Biotin carboxylase (BC) catalyzes the carboxylation of biotin on its carrier protein (BCCP) and then the CO(2) group is transferred by the transcarboxylase to acetyl-CoA to form malonyl-CoA. The sequence is that of Acetyl-coenzyme A carboxylase carboxyl transferase subunit beta from Pediococcus pentosaceus (strain ATCC 25745 / CCUG 21536 / LMG 10740 / 183-1w).